A 492-amino-acid chain; its full sequence is Probable cytochrome P450 516B1 (492 aa).

A helical membrane pass occupies residues 1–17; the sequence is MYLILSLIIFLAYVAFH. Cys438 contacts heme.

It belongs to the cytochrome P450 family. It depends on heme as a cofactor.

Its subcellular location is the membrane. The chain is Probable cytochrome P450 516B1 (cyp516B1) from Dictyostelium discoideum (Social amoeba).